A 933-amino-acid chain; its full sequence is Phosphoenolpyruvate carboxylase (933 aa).

Residues His158 and Lys592 contribute to the active site.

Belongs to the PEPCase type 1 family. It depends on Mg(2+) as a cofactor.

The catalysed reaction is oxaloacetate + phosphate = phosphoenolpyruvate + hydrogencarbonate. Functionally, forms oxaloacetate, a four-carbon dicarboxylic acid source for the tricarboxylic acid cycle. This Nitrosomonas europaea (strain ATCC 19718 / CIP 103999 / KCTC 2705 / NBRC 14298) protein is Phosphoenolpyruvate carboxylase.